Reading from the N-terminus, the 279-residue chain is Probable cyclic nucleotide phosphodiesterase Psyc_2036 (279 aa).

Residues aspartate 23, histidine 25, aspartate 70, asparagine 100, histidine 179, histidine 218, and histidine 220 each coordinate Fe cation. AMP is bound by residues histidine 25, aspartate 70, and 100–101 (NH). Histidine 220 lines the AMP pocket.

The protein belongs to the cyclic nucleotide phosphodiesterase class-III family. Requires Fe(2+) as cofactor.

The protein is Probable cyclic nucleotide phosphodiesterase Psyc_2036 of Psychrobacter arcticus (strain DSM 17307 / VKM B-2377 / 273-4).